Consider the following 165-residue polypeptide: NAD(P)H-quinone oxidoreductase subunit I, chloroplastic (165 aa).

4Fe-4S ferredoxin-type domains are found at residues 55–84 and 95–124; these read GRIH…VDWE and KSYS…MTEE. The [4Fe-4S] cluster site is built by Cys-64, Cys-67, Cys-70, Cys-74, Cys-104, Cys-107, Cys-110, and Cys-114.

This sequence belongs to the complex I 23 kDa subunit family. In terms of assembly, NDH is composed of at least 16 different subunits, 5 of which are encoded in the nucleus. The cofactor is [4Fe-4S] cluster.

The protein localises to the plastid. Its subcellular location is the chloroplast thylakoid membrane. It catalyses the reaction a plastoquinone + NADH + (n+1) H(+)(in) = a plastoquinol + NAD(+) + n H(+)(out). It carries out the reaction a plastoquinone + NADPH + (n+1) H(+)(in) = a plastoquinol + NADP(+) + n H(+)(out). Its function is as follows. NDH shuttles electrons from NAD(P)H:plastoquinone, via FMN and iron-sulfur (Fe-S) centers, to quinones in the photosynthetic chain and possibly in a chloroplast respiratory chain. The immediate electron acceptor for the enzyme in this species is believed to be plastoquinone. Couples the redox reaction to proton translocation, and thus conserves the redox energy in a proton gradient. The protein is NAD(P)H-quinone oxidoreductase subunit I, chloroplastic of Psilotum nudum (Whisk fern).